The sequence spans 259 residues: Ovulation prohormone (259 aa).

An N-terminal signal peptide occupies residues 1-34 (MKMSGLLSKPDYGVVGIVFTVVFCCWCSSSTTHA). The propeptide occupies 35-102 (LSIAEPGRDR…SGEKTRLTAA (68 aa)). The interval 42-103 (RDRYDKRSPT…GEKTRLTAAK (62 aa)) is disordered. 2 consecutive repeats follow at residues 119-123 (RLRFH) and 146-150 (RLRFH). Positions 119 to 150 (RLRFHKRRVDSADESNDDGFDRKAREPRLRFH) are 2 X 5 AA repeats of R-L-R-F-H. The disordered stretch occupies residues 149 to 197 (FHDVRKRSATAEEGSENAEIEESHLGNSRSRRSAGSAPSSANEVQRSKR). The propeptide occupies 181-195 (SAGSAPSSANEVQRS). Leucine 233 is modified (leucine amide). Residues 237 to 259 (GSAFFDHIPIIFGEPQYDYQPFK) constitute a propeptide that is removed on maturation.

The protein belongs to the molluscan ELH family.

The protein resides in the secreted. Functionally, CDCH induces ovulation and egg-mass production; it may also stimulate synthesis of secretory products in the female accessory sex glands and affect neurons in the neuronal circuits controlling locomotion and feeding. Calfluxin is involved in the influx of calcium into mitochondria of the albumen gland. In terms of biological role, CDCA (or alpha-CDCP) triggers the electrical activity of the caudodorsal cells (CDCS). The protein is Ovulation prohormone of Lymnaea stagnalis (Great pond snail).